A 101-amino-acid chain; its full sequence is Urease subunit beta (101 aa).

Belongs to the urease beta subunit family. As to quaternary structure, heterotrimer of UreA (gamma), UreB (beta) and UreC (alpha) subunits. Three heterotrimers associate to form the active enzyme.

It is found in the cytoplasm. The enzyme catalyses urea + 2 H2O + H(+) = hydrogencarbonate + 2 NH4(+). The protein operates within nitrogen metabolism; urea degradation; CO(2) and NH(3) from urea (urease route): step 1/1. The sequence is that of Urease subunit beta from Cereibacter sphaeroides (strain ATCC 17025 / ATH 2.4.3) (Rhodobacter sphaeroides).